Consider the following 1390-residue polypeptide: Hepatocyte growth factor receptor (1390 aa).

Residues 1-24 form the signal peptide; the sequence is MKAPAVLAPGILVLLFTLVQRSNG. Residues 25-932 are Extracellular-facing; it reads ECKEALAKSE…VIVQPDQNFT (908 aa). Residues 27 to 515 form the Sema domain; the sequence is KEALAKSEMN…TGKKITKIPL (489 aa). A glycan (N-linked (GlcNAc...) asparagine) is linked at Asn-45. 4 disulfides stabilise this stretch: Cys-95–Cys-101, Cys-98–Cys-160, Cys-133–Cys-141, and Cys-172–Cys-175. N-linked (GlcNAc...) asparagine glycosylation occurs at Asn-106. N-linked (GlcNAc...) asparagine glycosylation is present at Asn-149. Asn-202 is a glycosylation site (N-linked (GlcNAc...) asparagine). Disulfide bonds link Cys-298–Cys-363 and Cys-385–Cys-397. 2 N-linked (GlcNAc...) asparagine glycosylation sites follow: Asn-399 and Asn-405. 4 cysteine pairs are disulfide-bonded: Cys-520–Cys-538, Cys-526–Cys-561, Cys-529–Cys-545, and Cys-541–Cys-551. 3 consecutive IPT/TIG domains span residues 563-655, 657-739, and 742-836; these read PAIY…FSYV, PVIT…FSYR, and PIVY…LIYV. O-linked (Man) threonine glycosylation is present at Thr-582. The N-linked (GlcNAc...) asparagine glycan is linked to Asn-607. Residues Cys-610 and Cys-624 are joined by a disulfide bond. An N-linked (GlcNAc...) asparagine glycan is attached at Asn-635. Thr-676 carries O-linked (Man) threonine glycosylation. Cys-697 and Cys-709 are oxidised to a cystine. O-linked (Man) threonine glycosylation is present at Thr-761. N-linked (GlcNAc...) asparagine glycans are attached at residues Asn-785, Asn-879, and Asn-930. The chain crosses the membrane as a helical span at residues 933–955; that stretch reads GLIAGVVSISTALLLLLGFFLWL. Residues 956–1390 are Cytoplasmic-facing; the sequence is KKRKQIKDLG…TRPASFWETS (435 aa). At Ser-966 the chain carries Phosphoserine. At Thr-977 the chain carries Phosphothreonine. Phosphoserine occurs at positions 990, 997, and 1000. A Phosphotyrosine modification is found at Tyr-1003. The region spanning 1078-1345 is the Protein kinase domain; sequence VHFNEVIGRG…RISAIFSTFI (268 aa). ATP contacts are provided by residues 1084–1092 and Lys-1110; that span reads IGRGHFGCV. Catalysis depends on Asp-1204, which acts as the Proton acceptor. An interaction with RANBP9 region spans residues 1212 to 1390; it reads LDEKFTVKVA…TRPASFWETS (179 aa). Tyr-1230 is modified (phosphotyrosine). Tyr-1234 and Tyr-1235 each carry phosphotyrosine; by autocatalysis. Residue Thr-1289 is modified to Phosphothreonine. The tract at residues 1320-1359 is interaction with MUC20; that stretch reads WHPKAEMRPSFSELVSRISAIFSTFIGEHYVHVNATYVNV. Tyr-1349 and Tyr-1356 each carry phosphotyrosine; by autocatalysis. Residue Tyr-1365 is modified to Phosphotyrosine.

It belongs to the protein kinase superfamily. Tyr protein kinase family. Heterodimer made of an alpha chain (50 kDa) and a beta chain (145 kDa) which are disulfide linked. Binds PLXNB1. Interacts when phosphorylated with downstream effectors including STAT3, PIK3R1, SRC, PCLG1, GRB2 and GAB1. Interacts with SPSB1, SPSB2 and SPSB4. Interacts with INPP5D/SHIP1. When phosphorylated at Tyr-1356, interacts with INPPL1/SHIP2. Interacts with RANBP9 and RANBP10, as well as SPSB1, SPSB2, SPSB3 and SPSB4. SPSB1 binding occurs in the presence and in the absence of HGF, however HGF treatment has a positive effect on this interaction. Interacts with MUC20; prevents interaction with GRB2 and suppresses hepatocyte growth factor-induced cell proliferation. Interacts with GRB10. Interacts with PTPN1 and PTPN2. Interacts with LECT2; this interaction may have an antagonistic effect on receptor activation. Interacts with HSP90AA1 and HSP90AB1; the interaction suppresses MET kinase activity. Interacts with tensin TNS3. Interacts (when phosphorylated) with tensin TNS4 (via SH2 domain); the interaction increases MET protein stability by inhibiting MET endocytosis and subsequent lysosomal degradation. In terms of assembly, (Microbial infection) Interacts via extracytoplasmic residues 25-656 with L.monocytogenes InlB; MET can bind HGF, its endogenous ligand, and InlB simultaneously. InlB probably dimerizes upon binding to MET, which encourages subsequent dimerization of MET. In terms of processing, autophosphorylated in response to ligand binding on Tyr-1234 and Tyr-1235 in the kinase domain leading to further phosphorylation of Tyr-1349 and Tyr-1356 in the C-terminal multifunctional docking site. Dephosphorylated by PTPRJ at Tyr-1349 and Tyr-1365. Dephosphorylated by PTPN1 and PTPN2. Ubiquitinated. Ubiquitination by CBL regulates MET endocytosis, resulting in decreasing plasma membrane receptor abundance, and in endosomal degradation and/or recycling of internalized receptors. Post-translationally, O-mannosylation of IPT/TIG domains by TMEM260 is required for protein maturation. O-mannosylated residues are composed of single mannose glycans that are not elongated or modified. In terms of processing, (Microbial infection) Tyrosine phosphorylation is stimulated by L.monocytogenes InlB. Tyrosine phosphorylation is maximal 10-20 minutes after treatment with InlB and disappears by 60 minutes. The phosphorylated residues were not identified. As to expression, expressed in normal hepatocytes as well as in epithelial cells lining the stomach, the small and the large intestine. Found also in basal keratinocytes of esophagus and skin. High levels are found in liver, gastrointestinal tract, thyroid and kidney. Also present in the brain. Expressed in metaphyseal bone (at protein level).

The protein localises to the membrane. It is found in the secreted. The enzyme catalyses L-tyrosyl-[protein] + ATP = O-phospho-L-tyrosyl-[protein] + ADP + H(+). With respect to regulation, in its inactive state, the C-terminal tail interacts with the catalytic domain and inhibits the kinase activity. Upon ligand binding, the C-terminal tail is displaced and becomes phosphorylated, thus increasing the kinase activity. Its function is as follows. Receptor tyrosine kinase that transduces signals from the extracellular matrix into the cytoplasm by binding to hepatocyte growth factor/HGF ligand. Regulates many physiological processes including proliferation, scattering, morphogenesis and survival. Ligand binding at the cell surface induces autophosphorylation of MET on its intracellular domain that provides docking sites for downstream signaling molecules. Following activation by ligand, interacts with the PI3-kinase subunit PIK3R1, PLCG1, SRC, GRB2, STAT3 or the adapter GAB1. Recruitment of these downstream effectors by MET leads to the activation of several signaling cascades including the RAS-ERK, PI3 kinase-AKT, or PLCgamma-PKC. The RAS-ERK activation is associated with the morphogenetic effects while PI3K/AKT coordinates prosurvival effects. During embryonic development, MET signaling plays a role in gastrulation, development and migration of neuronal precursors, angiogenesis and kidney formation. During skeletal muscle development, it is crucial for the migration of muscle progenitor cells and for the proliferation of secondary myoblasts. In adults, participates in wound healing as well as organ regeneration and tissue remodeling. Also promotes differentiation and proliferation of hematopoietic cells. May regulate cortical bone osteogenesis. (Microbial infection) Acts as a receptor for Listeria monocytogenes internalin InlB, mediating entry of the pathogen into cells. The sequence is that of Hepatocyte growth factor receptor (MET) from Homo sapiens (Human).